Consider the following 218-residue polypeptide: N-(5'-phosphoribosyl)anthranilate isomerase (218 aa).

This sequence belongs to the TrpF family.

It catalyses the reaction N-(5-phospho-beta-D-ribosyl)anthranilate = 1-(2-carboxyphenylamino)-1-deoxy-D-ribulose 5-phosphate. The protein operates within amino-acid biosynthesis; L-tryptophan biosynthesis; L-tryptophan from chorismate: step 3/5. This Rhodopseudomonas palustris (strain BisA53) protein is N-(5'-phosphoribosyl)anthranilate isomerase.